We begin with the raw amino-acid sequence, 766 residues long: 5-methyltetrahydropteroyltriglutamate--homocysteine methyltransferase (766 aa).

5-methyltetrahydropteroyltri-L-glutamate-binding positions include 23 to 26 (RELK) and Lys121. Residues 438-440 (IGS) and Glu491 each bind L-homocysteine. Residues 438–440 (IGS) and Glu491 contribute to the L-methionine site. 5-methyltetrahydropteroyltri-L-glutamate contacts are provided by residues 522–523 (RC) and Trp568. Position 606 (Asp606) interacts with L-homocysteine. Asp606 contributes to the L-methionine binding site. Residue Glu612 participates in 5-methyltetrahydropteroyltri-L-glutamate binding. The Zn(2+) site is built by His648, Cys650, and Glu672. His701 serves as the catalytic Proton donor. Cys733 serves as a coordination point for Zn(2+).

Belongs to the vitamin-B12 independent methionine synthase family. Zn(2+) is required as a cofactor.

The enzyme catalyses 5-methyltetrahydropteroyltri-L-glutamate + L-homocysteine = tetrahydropteroyltri-L-glutamate + L-methionine. Its pathway is amino-acid biosynthesis; L-methionine biosynthesis via de novo pathway; L-methionine from L-homocysteine (MetE route): step 1/1. Catalyzes the transfer of a methyl group from 5-methyltetrahydrofolate to homocysteine resulting in methionine formation. The polypeptide is 5-methyltetrahydropteroyltriglutamate--homocysteine methyltransferase (Photobacterium profundum (strain SS9)).